The following is a 934-amino-acid chain: UPF0182 protein sync_1321 (934 aa).

The next 9 membrane-spanning stretches (helical) occupy residues 2-22, 45-65, 86-106, 129-149, 165-185, 208-228, 251-271, 300-320, and 327-347; these read AKIIWTIGRFGLLLIPLIVII, LLLQLGGALFAFLFVGSCALW, GYRYGFCLLACLLVLLSVLAI, FSTGWPLLSLSILMLTLIMFG, VCICLIVARSWGLWSLAFSIP, IAFGLELVLLQLSLTLSTALW, HGLRPGFALVLMSFSGLMWLS, LGSIALLVLAFVVLPSPFSSV, and LILAFIAIASFGLEMVLFPLM.

The protein belongs to the UPF0182 family.

Its subcellular location is the cell membrane. The polypeptide is UPF0182 protein sync_1321 (Synechococcus sp. (strain CC9311)).